We begin with the raw amino-acid sequence, 245 residues long: Orotidine 5'-phosphate decarboxylase (245 aa).

Substrate is bound by residues Asp22, Lys44, 71–80 (DLKFHDIPNT), Thr131, Arg192, Gln201, Gly221, and Arg222. Lys73 serves as the catalytic Proton donor.

It belongs to the OMP decarboxylase family. Type 1 subfamily. Homodimer.

The catalysed reaction is orotidine 5'-phosphate + H(+) = UMP + CO2. It functions in the pathway pyrimidine metabolism; UMP biosynthesis via de novo pathway; UMP from orotate: step 2/2. In terms of biological role, catalyzes the decarboxylation of orotidine 5'-monophosphate (OMP) to uridine 5'-monophosphate (UMP). The sequence is that of Orotidine 5'-phosphate decarboxylase from Escherichia coli O127:H6 (strain E2348/69 / EPEC).